Here is a 144-residue protein sequence, read N- to C-terminus: Large ribosomal subunit protein uL15 (144 aa).

The interval 1-57 is disordered; sequence MRLNTLSPAAGSKHAPKRVGRGIGSGLGKTGGRGHKGQKSRSGGKVRPGFEGGQMPL. A compositionally biased stretch (gly residues) spans 21 to 31; sequence RGIGSGLGKTG. The segment covering 32 to 44 has biased composition (basic residues); that stretch reads GRGHKGQKSRSGG.

Belongs to the universal ribosomal protein uL15 family. Part of the 50S ribosomal subunit.

Binds to the 23S rRNA. The polypeptide is Large ribosomal subunit protein uL15 (Vibrio vulnificus (strain CMCP6)).